Here is a 141-residue protein sequence, read N- to C-terminus: Hemoglobin subunit alpha (141 aa).

The Globin domain occupies 1-141 (VLSPADKTNV…VSTVLTSKYR (141 aa)). Residue S3 is modified to Phosphoserine. Position 7 is an N6-succinyllysine (K7). T8 carries the post-translational modification Phosphothreonine. K11 carries the post-translational modification N6-succinyllysine. Position 16 is an N6-acetyllysine; alternate (K16). K16 carries the post-translational modification N6-succinyllysine; alternate. Y24 carries the phosphotyrosine modification. Position 35 is a phosphoserine (S35). K40 is subject to N6-succinyllysine. Residue S49 is modified to Phosphoserine. O2 is bound at residue H58. A heme b-binding site is contributed by H87. S102 is subject to Phosphoserine. T108 carries the post-translational modification Phosphothreonine. S124 and S131 each carry phosphoserine. 2 positions are modified to phosphothreonine: T134 and T137. S138 is modified (phosphoserine).

Belongs to the globin family. In terms of assembly, heterotetramer of two alpha chains and two beta chains. In terms of tissue distribution, red blood cells.

Functionally, involved in oxygen transport from the lung to the various peripheral tissues. Its function is as follows. Hemopressin acts as an antagonist peptide of the cannabinoid receptor CNR1. Hemopressin-binding efficiently blocks cannabinoid receptor CNR1 and subsequent signaling. The protein is Hemoglobin subunit alpha (HBA) of Cebus capucinus (White-faced sapajou).